Consider the following 335-residue polypeptide: 3-isopropylmalate dehydrogenase (335 aa).

Arg-87, Arg-97, Arg-121, and Asp-211 together coordinate substrate. Residues Asp-211, Asp-235, and Asp-239 each coordinate Mg(2+). 271-283 (GSAPDIAGQSKAD) is an NAD(+) binding site.

Belongs to the isocitrate and isopropylmalate dehydrogenases family. LeuB type 2 subfamily. As to quaternary structure, homodimer. Requires Mg(2+) as cofactor. The cofactor is Mn(2+).

It is found in the cytoplasm. The enzyme catalyses (2R,3S)-3-isopropylmalate + NAD(+) = 4-methyl-2-oxopentanoate + CO2 + NADH. The protein operates within amino-acid biosynthesis; L-leucine biosynthesis; L-leucine from 3-methyl-2-oxobutanoate: step 3/4. Functionally, catalyzes the oxidation of 3-carboxy-2-hydroxy-4-methylpentanoate (3-isopropylmalate) to 3-carboxy-4-methyl-2-oxopentanoate. The product decarboxylates to 4-methyl-2 oxopentanoate. The sequence is that of 3-isopropylmalate dehydrogenase from Nocardia farcinica (strain IFM 10152).